The following is a 632-amino-acid chain: Biosynthetic arginine decarboxylase (632 aa).

Residue lysine 101 is modified to N6-(pyridoxal phosphate)lysine. 281–291 provides a ligand contact to substrate; sequence FDVGGGLGVDY.

It belongs to the Orn/Lys/Arg decarboxylase class-II family. SpeA subfamily. Mg(2+) is required as a cofactor. Requires pyridoxal 5'-phosphate as cofactor.

It carries out the reaction L-arginine + H(+) = agmatine + CO2. The protein operates within amine and polyamine biosynthesis; agmatine biosynthesis; agmatine from L-arginine: step 1/1. Catalyzes the biosynthesis of agmatine from arginine. The protein is Biosynthetic arginine decarboxylase of Salmonella dublin (strain CT_02021853).